A 364-amino-acid chain; its full sequence is Pectinesterase (364 aa).

A signal peptide spans 1-22; sequence MSCIAVEAVLLGILLYIPIVLS. An N-linked (GlcNAc...) asparagine glycan is attached at N103. D220 is a catalytic residue.

Its subcellular location is the secreted. The catalysed reaction is [(1-&gt;4)-alpha-D-galacturonosyl methyl ester](n) + n H2O = [(1-&gt;4)-alpha-D-galacturonosyl](n) + n methanol + n H(+). The protein operates within glycan metabolism; pectin degradation; 2-dehydro-3-deoxy-D-gluconate from pectin: step 1/5. Catalyzes the demethylesterification of homogalacturonan components of pectin. The polypeptide is Pectinesterase (Parthenium hysterophorus (Santa Maria feverfew)).